A 1186-amino-acid polypeptide reads, in one-letter code: Pumilio homolog 1 (1186 aa).

An N-acetylserine modification is found at Ser2. At Ser19 the chain carries Phosphoserine. The tract at residues 22-73 (LKHHPQEPANPNMPVVLTSGTGSQAQPQPAANQALAAGTHSSPVPGSIGVAG) is disordered. Residues 45–58 (QAQPQPAANQALAA) are compositionally biased toward low complexity. 3 positions are modified to phosphoserine: Ser75, Ser98, and Ser106. Thr112 carries the phosphothreonine modification. 5 positions are modified to phosphoserine: Ser124, Ser159, Ser197, Ser209, and Ser229. Residues 233 to 272 (SCLRKGGFGPRDADSDENDKGEKKNKGTFDGDKLGDLKEE) are disordered. Residues 250 to 272 (NDKGEKKNKGTFDGDKLGDLKEE) show a composition bias toward basic and acidic residues. Ser305 bears the Phosphoserine mark. The span at 485–502 (TNSANQQTTPQAQQGQQQ) shows a compositional bias: low complexity. 2 disordered regions span residues 485-524 (TNSA…GQQT) and 613-648 (AGTT…FYGN). Residues 511–524 (RPLTPNQNQQGQQT) show a composition bias toward polar residues. Position 514 is a phosphothreonine (Thr514). The segment covering 626 to 639 (QQPQPQPQQQPNNN) has biased composition (low complexity). Ser709 and Ser714 each carry phosphoserine. Positions 742–773 (GPVGMPLPSQGPGHSQTPPPSLSSHGSSSSLN) are disordered. Low complexity predominate over residues 763–773 (LSSHGSSSSLN). Arg796 carries the post-translational modification Omega-N-methylarginine. 2 positions are modified to phosphoserine: Ser806 and Ser822. Residues 828-1168 (GRSRLLEDFR…HILAKLEKYY (341 aa)) form the PUM-HD domain. Pumilio repeat units follow at residues 848 to 883 (EIAG…LVFN), 884 to 919 (EILQ…ALAE), 920 to 955 (RIRG…EMVR), 956 to 991 (ELDG…FIID), 992 to 1027 (AFKG…PILE), 1028 to 1063 (ELHQ…KIVA), 1064 to 1099 (EIRG…VLID), and 1103 to 1142 (TMND…IVMH). An adenine-nucleotide binding in RNA target region spans residues 863 to 867 (SRFIQ). A uracil-nucleotide binding in RNA target region spans residues 899–903 (NYVIQ). An adenine-nucleotide binding in RNA target region spans residues 935-939 (CRVIQ). Residues 971 to 975 (NHVVQ) form a non-specific-nucleotide binding in RNA target region. The adenine-nucleotide binding in RNA target stretch occupies residues 1007 to 1011 (CRVIQ). Positions 1043-1047 (NYVIQ) are uracil-nucleotide binding in RNA target. The guanine-nucleotide binding in RNA target stretch occupies residues 1079–1083 (SNVVE). The uracil-nucleotide binding in RNA target stretch occupies residues 1122–1126 (NYVVQ).

In terms of assembly, recruits the CCR4-POP2-NOT deadenylase leading to translational inhibition and mRNA degradation. In case of viral infection, interacts with DHX58. Interacts with TRIM71 (via NHL repeats) in an RNA-dependent manner. In terms of processing, phosphorylation at Ser-714 promotes RNA-binding activity. Following growth factor stimulation phosphorylated at Ser-714, promoting binding to the 3'-UTR of CDKN1B/p27 mRNA. In terms of tissue distribution, expressed in brain, heart, kidney, muscle, intestine and stomach. Not expressed in cerebellum, corpus callosum, caudate nucleus, hippocampus, medulla oblongata and putamen. Expressed in all fetal tissues tested.

The protein localises to the cytoplasm. The protein resides in the P-body. Its subcellular location is the cytoplasmic granule. Its function is as follows. Sequence-specific RNA-binding protein that acts as a post-transcriptional repressor by binding the 3'-UTR of mRNA targets. Binds to an RNA consensus sequence, the Pumilio Response Element (PRE), 5'-UGUANAUA-3', that is related to the Nanos Response Element (NRE). Mediates post-transcriptional repression of transcripts via different mechanisms: acts via direct recruitment of the CCR4-POP2-NOT deadenylase leading to translational inhibition and mRNA degradation. Also mediates deadenylation-independent repression by promoting accessibility of miRNAs. Following growth factor stimulation, phosphorylated and binds to the 3'-UTR of CDKN1B/p27 mRNA, inducing a local conformational change that exposes miRNA-binding sites, promoting association of miR-221 and miR-222, efficient suppression of CDKN1B/p27 expression, and rapid entry to the cell cycle. Acts as a post-transcriptional repressor of E2F3 mRNAs by binding to its 3'-UTR and facilitating miRNA regulation. Represses a program of genes necessary to maintain genomic stability such as key mitotic, DNA repair and DNA replication factors. Its ability to repress those target mRNAs is regulated by the lncRNA NORAD (non-coding RNA activated by DNA damage) which, due to its high abundance and multitude of PUMILIO binding sites, is able to sequester a significant fraction of PUM1 and PUM2 in the cytoplasm. Involved in neuronal functions by regulating ATXN1 mRNA levels: acts by binding to the 3'-UTR of ATXN1 transcripts, leading to their down-regulation independently of the miRNA machinery. Plays a role in cytoplasmic sensing of viral infection. In testis, acts as a post-transcriptional regulator of spermatogenesis by binding to the 3'-UTR of mRNAs coding for regulators of p53/TP53. Involved in embryonic stem cell renewal by facilitating the exit from the ground state: acts by targeting mRNAs coding for naive pluripotency transcription factors and accelerates their down-regulation at the onset of differentiation. Binds specifically to miRNA MIR199A precursor, with PUM2, regulates miRNA MIR199A expression at a postranscriptional level. The polypeptide is Pumilio homolog 1 (Homo sapiens (Human)).